The following is a 362-amino-acid chain: Histidinol-phosphate aminotransferase (362 aa).

Position 218 is an N6-(pyridoxal phosphate)lysine (lysine 218).

It belongs to the class-II pyridoxal-phosphate-dependent aminotransferase family. Histidinol-phosphate aminotransferase subfamily. Homodimer. Pyridoxal 5'-phosphate serves as cofactor.

The enzyme catalyses L-histidinol phosphate + 2-oxoglutarate = 3-(imidazol-4-yl)-2-oxopropyl phosphate + L-glutamate. It functions in the pathway amino-acid biosynthesis; L-histidine biosynthesis; L-histidine from 5-phospho-alpha-D-ribose 1-diphosphate: step 7/9. The sequence is that of Histidinol-phosphate aminotransferase from Xanthomonas campestris pv. campestris (strain ATCC 33913 / DSM 3586 / NCPPB 528 / LMG 568 / P 25).